Consider the following 363-residue polypeptide: tRNA(Met) cytidine acetate ligase (363 aa).

Residues 7–20 (IAEFNPFHNGHKYL), glycine 96, asparagine 152, and arginine 175 contribute to the ATP site.

Belongs to the TmcAL family.

Its subcellular location is the cytoplasm. It carries out the reaction cytidine(34) in elongator tRNA(Met) + acetate + ATP = N(4)-acetylcytidine(34) in elongator tRNA(Met) + AMP + diphosphate. Its function is as follows. Catalyzes the formation of N(4)-acetylcytidine (ac(4)C) at the wobble position of elongator tRNA(Met), using acetate and ATP as substrates. First activates an acetate ion to form acetyladenylate (Ac-AMP) and then transfers the acetyl group to tRNA to form ac(4)C34. In Streptococcus gordonii (strain Challis / ATCC 35105 / BCRC 15272 / CH1 / DL1 / V288), this protein is tRNA(Met) cytidine acetate ligase.